The chain runs to 88 residues: CLAVATA3/ESR (CLE)-related protein 42 (88 aa).

Residues 1-24 (MRSPHITISLVFLFFLFLIIQTHQ) form the signal peptide. The interval 69 to 88 (KMIGANEHGVPSGPNPISNR) is disordered. Hydroxyproline occurs at positions 79 and 82. Proline 82 carries an O-linked (Ara...) hydroxyproline glycan.

The protein belongs to the CLV3/ESR signal peptide family. Post-translationally, the O-glycosylation (arabinosylation) of the hydroxyproline Pro-82 enhances binding affinity of the CLE42p peptide for its receptor. In terms of tissue distribution, expressed at low levels in seedlings, roots and inflorescence.

It localises to the secreted. The protein resides in the extracellular space. In terms of biological role, extracellular signal peptide that regulates cell fate. Represses tracheary element differentiation but promotes the formation of procambial cells. In Arabidopsis thaliana (Mouse-ear cress), this protein is CLAVATA3/ESR (CLE)-related protein 42.